The sequence spans 361 residues: 3-dehydroquinate synthase (361 aa).

The protein belongs to the archaeal-type DHQ synthase family.

It carries out the reaction 2-amino-2,3,7-trideoxy-D-lyxo-hept-6-ulosonate + NAD(+) + H2O = 3-dehydroquinate + NH4(+) + NADH + H(+). Functionally, catalyzes the oxidative deamination and cyclization of 2-amino-3,7-dideoxy-D-threo-hept-6-ulosonic acid (ADH) to yield 3-dehydroquinate (DHQ), which is fed into the canonical shikimic pathway of aromatic amino acid biosynthesis. This chain is 3-dehydroquinate synthase, found in Methanococcus maripaludis (strain C6 / ATCC BAA-1332).